The chain runs to 190 residues: Ion-translocating oxidoreductase complex subunit B (190 aa).

Residues 1–26 form a hydrophobic region; it reads MTALWIAIAALSALGLLFGLVLGYAA. The 4Fe-4S domain maps to 32–90; that stretch reads EEDPVAEQVDEILPQSQCGQCGYPGCRPYAEAVANGEMINKCAPGGEQVMLKLAELLNV. 12 residues coordinate [4Fe-4S] cluster: C49, C52, C57, C73, C115, C118, C121, C125, C145, C148, C151, and C155. 4Fe-4S ferredoxin-type domains follow at residues 106–135 and 136–165; these read QVAY…GATR and AMHT…MRPV.

This sequence belongs to the 4Fe4S bacterial-type ferredoxin family. RnfB subfamily. As to quaternary structure, the complex is composed of six subunits: RnfA, RnfB, RnfC, RnfD, RnfE and RnfG. [4Fe-4S] cluster is required as a cofactor.

It is found in the cell inner membrane. Its function is as follows. Part of a membrane-bound complex that couples electron transfer with translocation of ions across the membrane. In Serratia proteamaculans (strain 568), this protein is Ion-translocating oxidoreductase complex subunit B.